The primary structure comprises 122 residues: Large ribosomal subunit protein uL14 (122 aa).

This sequence belongs to the universal ribosomal protein uL14 family. As to quaternary structure, part of the 50S ribosomal subunit. Forms a cluster with proteins L3 and L19. In the 70S ribosome, L14 and L19 interact and together make contacts with the 16S rRNA in bridges B5 and B8.

In terms of biological role, binds to 23S rRNA. Forms part of two intersubunit bridges in the 70S ribosome. The polypeptide is Large ribosomal subunit protein uL14 (Mycoplasma mobile (strain ATCC 43663 / 163K / NCTC 11711) (Mesomycoplasma mobile)).